The primary structure comprises 356 residues: Methionine import ATP-binding protein MetN 1 (356 aa).

The 240-residue stretch at 2 to 241 (IELKNISVTF…PQQPLTKDFI (240 aa)) folds into the ABC transporter domain. 38–45 (GYSGAGKS) lines the ATP pocket.

Belongs to the ABC transporter superfamily. Methionine importer (TC 3.A.1.24) family. In terms of assembly, the complex is composed of two ATP-binding proteins (MetN), two transmembrane proteins (MetI) and a solute-binding protein (MetQ).

The protein resides in the cell membrane. It catalyses the reaction L-methionine(out) + ATP + H2O = L-methionine(in) + ADP + phosphate + H(+). It carries out the reaction D-methionine(out) + ATP + H2O = D-methionine(in) + ADP + phosphate + H(+). Part of the ABC transporter complex MetNIQ involved in methionine import. Responsible for energy coupling to the transport system. This is Methionine import ATP-binding protein MetN 1 from Enterococcus faecalis (strain ATCC 700802 / V583).